A 499-amino-acid polypeptide reads, in one-letter code: Glutamyl-tRNA(Gln) amidotransferase subunit A, mitochondrial (499 aa).

Residues K61 and S139 each act as charge relay system in the active site. S163 serves as the catalytic Acyl-ester intermediate.

Belongs to the amidase family. GatA subfamily. In terms of assembly, subunit of the heterotrimeric GatCAB amidotransferase (AdT) complex, composed of A, B and C subunits.

It is found in the mitochondrion. The catalysed reaction is L-glutamyl-tRNA(Gln) + L-glutamine + ATP + H2O = L-glutaminyl-tRNA(Gln) + L-glutamate + ADP + phosphate + H(+). Allows the formation of correctly charged Gln-tRNA(Gln) through the transamidation of misacylated Glu-tRNA(Gln) in the mitochondria. The reaction takes place in the presence of glutamine and ATP through an activated gamma-phospho-Glu-tRNA(Gln). The sequence is that of Glutamyl-tRNA(Gln) amidotransferase subunit A, mitochondrial from Coccidioides posadasii (strain C735) (Valley fever fungus).